Here is a 351-residue protein sequence, read N- to C-terminus: tRNA N6-adenosine threonylcarbamoyltransferase (351 aa).

2 residues coordinate Fe cation: His-124 and His-128. Substrate is bound by residues 146–150, Asp-180, Gly-193, Asp-197, and Asn-285; that span reads LVSGG. Residue Asp-313 participates in Fe cation binding.

Belongs to the KAE1 / TsaD family. Fe(2+) serves as cofactor.

The protein localises to the cytoplasm. The enzyme catalyses L-threonylcarbamoyladenylate + adenosine(37) in tRNA = N(6)-L-threonylcarbamoyladenosine(37) in tRNA + AMP + H(+). Functionally, required for the formation of a threonylcarbamoyl group on adenosine at position 37 (t(6)A37) in tRNAs that read codons beginning with adenine. Is involved in the transfer of the threonylcarbamoyl moiety of threonylcarbamoyl-AMP (TC-AMP) to the N6 group of A37, together with TsaE and TsaB. TsaD likely plays a direct catalytic role in this reaction. This chain is tRNA N6-adenosine threonylcarbamoyltransferase, found in Mycobacterium leprae (strain TN).